An 824-amino-acid polypeptide reads, in one-letter code: Intraflagellar transport protein 88 homolog (824 aa).

Disordered regions lie at residues 1–27 (MENVHLAPETDEDDLYSGFNDYNPAYD) and 111–134 (AFDPLGQSRGPAPPLEAKNEDSPE). 11 TPR repeats span residues 196 to 229 (YSVLFNLASQYSANEMYAEALNTYQVIVKNKMFS), 232 to 265 (GRLKVNMGNIYLKQRNYSKAIKFYRMALDQIPSV), 271 to 304 (IKIMQNIGITFIKTGQYSDAINSFEHIMSMAPSL), 415 to 448 (NDLEINKAITYLRQKDFNQAVDTLKMFEKKDSRV), 450 to 483 (SAAATNLSFLYYLENEFAQASSYADLAVNSDRYN), 484 to 517 (PSALTNKGNTVFANGDYEKAAEFYKEALRNDSSC), 518 to 551 (TEALYNIGLTYKKLNRLDEALDSFLKLHAILRNS), 552 to 585 (AQVLCQIANIYELMEDPNQAIEWLMQLISVVPTD), 586 to 619 (SQALSKLGELYDSEGDKSQAFQYYYESYRYFPSN), 620 to 653 (IEVIEWLGAYYIDTQFCEKAIQYFERASLIQPTQ), and 654 to 687 (VKWQLMVASCFRRSGNYQKALDTYKEIHRKFPEN). Positions 721-731 (EMREQRIKSGR) are enriched in basic and acidic residues. Residues 721 to 824 (EMREQRIKSG…EELGDDLLPE (104 aa)) form a disordered region. Polar residues predominate over residues 748–757 (DSGQNNSASS). Residues 797 to 808 (ERPKTAAKKRID) are compositionally biased toward basic and acidic residues. Acidic residues predominate over residues 809 to 824 (EDDFADEELGDDLLPE).

In terms of assembly, component of the IFT complex B, at least composed of IFT20, IFT22, IFT25, IFT27, IFT46, IFT52, TRAF3IP1/IFT54, IFT57, IFT74, IFT80, IFT81, and IFT88. Interacts with IFT20, IFT22, IFT25, IFT27, IFT52, TRAF3IP1, IFT74, IFT80 and IFT81. Interacts with IFT172. Interacts with IFT57. Interacts with IFT46. Interacts with IFT70B. Interacts with C2CD3. Interacts with ENTR1 (via N-terminus). Interacts with LRRC56. Interacts with DZIP1. Interacts with CCDC38. Interacts with CCDC146. Interacts with CFAP53. In terms of tissue distribution, testis.

Its subcellular location is the cytoplasm. It is found in the cytoskeleton. The protein localises to the microtubule organizing center. It localises to the centrosome. The protein resides in the centriole. Its subcellular location is the cilium basal body. It is found in the cell projection. The protein localises to the cilium. It localises to the flagellum. Positively regulates primary cilium biogenesis. Also involved in autophagy since it is required for trafficking of ATG16L and the expansion of the autophagic compartment. The protein is Intraflagellar transport protein 88 homolog (Ift88) of Mus musculus (Mouse).